The sequence spans 239 residues: Tetraspanin-9 (239 aa).

The Cytoplasmic segment spans residues 1 to 13 (MARGCLCCLKYMM). A helical transmembrane segment spans residues 14–34 (FLFNLIFWLCGCGLLGVGIWL). Residues 35–55 (SVSQGNFATFSPSFPSLSAAN) are Extracellular-facing. The helical transmembrane segment at 56 to 76 (LVIVIGTVVMVTGFLGCLGAI) threads the bilayer. The Cytoplasmic segment spans residues 77–85 (KENKCLLLS). Residues 86 to 106 (FFIILLIILLTELILLILFFV) form a helical membrane-spanning segment. Over 107–203 (YMDKVNENAK…VKMWFDDNKH (97 aa)) the chain is Extracellular. A glycan (N-linked (GlcNAc...) asparagine) is linked at Asn-180. The chain crosses the membrane as a helical span at residues 204–224 (VLGTIGMCILIIQILGMAFSM). Topologically, residues 225 to 239 (TLFQQIHRTGKKYDA) are cytoplasmic.

This sequence belongs to the tetraspanin (TM4SF) family.

Its subcellular location is the membrane. The sequence is that of Tetraspanin-9 (tspan9) from Xenopus laevis (African clawed frog).